Here is a 558-residue protein sequence, read N- to C-terminus: MSHEAHNGTKLFKVQFTPDEEVLEHITDKQGVTPQSNTAAQRIVAVKNIIKNDDLHVDEATPESWREQNYVDVLGVDTEDTLQNGPGTGGGDVYSFYTIKRSNKMAQLATEMARTPAKTVSFSVSDNPEEAVSPPANKQTENKTPSKGRKNEFISTTPHRLRKRLSAPSQPSDSESDYSASNSDEELEEKSSAAKTPSKVSQTPGKTPSKKGKKNTASNLVEEYFEAHSSSKVLTSDRTLQRLQTPKLDQETLRKLLDQTPSAFADELHRISKKHEALFYKWMLQLHLGFNIILFGLGSKQSLIEKFRTSLLQDSLHIVINEFFPSITAKSILNSITEEALGHPGAFRSPLDQMDFILQRFKDDPSLELYLLIHNLDSQMLRGEKCQQVLGQLASIPNLHLLASVDHINAPLMWDQSKQSLYNWLWYETTTFGSYIEETSYENSLLVKRSGALALSSLTHVLRSLTPNARGIFRLLAEYQMANKDNPSYTGLSFQDFYQQCREAFLVNSDLTLRAQLTEFRDHKLIRTKKGMDGVEYLLIPLDLGTLTDFLEMEDKDT.

Residues 119–216 are disordered; it reads TVSFSVSDNP…TPSKKGKKNT (98 aa). The segment covering 136-145 has biased composition (polar residues); it reads ANKQTENKTP. Residues 169 to 182 show a composition bias toward low complexity; the sequence is SQPSDSESDYSASN. The span at 193–202 shows a compositional bias: polar residues; the sequence is AAKTPSKVSQ.

Belongs to the ORC2 family. In terms of assembly, ORC is composed of six subunits.

The protein localises to the nucleus. In terms of biological role, component of the origin recognition complex (ORC) that binds origins of replication. DNA-binding is ATP-dependent, however specific DNA sequences that define origins of replication have not been identified so far. ORC is required to assemble the pre-replication complex necessary to initiate DNA replication. This Xenopus laevis (African clawed frog) protein is Origin recognition complex subunit 2 (orc2).